The following is a 148-amino-acid chain: Ribonuclease pancreatic (148 aa).

Residues 1-25 (MGLEKSLILLPLLVLVFGWVQPSLG) form the signal peptide. Positions 32 and 35 each coordinate substrate. His-37 serves as the catalytic Proton acceptor. Disulfide bonds link Cys-50-Cys-108, Cys-64-Cys-119, Cys-82-Cys-134, and Cys-89-Cys-96. The N-linked (GlcNAc...) asparagine glycan is linked to Asn-58. Substrate is bound at residue 65–69 (KPVNT). A glycan (N-linked (GlcNAc...) asparagine) is linked at Asn-86. Residues Lys-90 and Arg-109 each coordinate substrate. The Proton donor role is filled by His-143.

Belongs to the pancreatic ribonuclease family. In terms of assembly, monomer. Interacts with and forms tight 1:1 complexes with RNH1. Dimerization of two such complexes may occur. Interaction with RNH1 inhibits this protein. In terms of tissue distribution, pancreas.

Its subcellular location is the secreted. The enzyme catalyses an [RNA] containing cytidine + H2O = an [RNA]-3'-cytidine-3'-phosphate + a 5'-hydroxy-ribonucleotide-3'-[RNA].. The catalysed reaction is an [RNA] containing uridine + H2O = an [RNA]-3'-uridine-3'-phosphate + a 5'-hydroxy-ribonucleotide-3'-[RNA].. Its function is as follows. Endonuclease that catalyzes the cleavage of RNA on the 3' side of pyrimidine nucleotides. Acts on single-stranded and double-stranded RNA. This Myodes glareolus (Bank vole) protein is Ribonuclease pancreatic (RNASE1).